The sequence spans 124 residues: Small ribosomal subunit protein uS12c (124 aa).

Disordered regions lie at residues 1–28 (MPTI…KSCP) and 104–124 (AAGV…KPKS). Composition is skewed to basic residues over residues 11 to 20 (ERRKINKKTK) and 109 to 124 (DRRK…KPKS).

This sequence belongs to the universal ribosomal protein uS12 family. In terms of assembly, part of the 30S ribosomal subunit.

It localises to the plastid. Its subcellular location is the chloroplast. Functionally, with S4 and S5 plays an important role in translational accuracy. Located at the interface of the 30S and 50S subunits. This Porphyra purpurea (Red seaweed) protein is Small ribosomal subunit protein uS12c (rps12).